A 300-amino-acid polypeptide reads, in one-letter code: Elongator complex protein 5 (300 aa).

Ser-252 carries the phosphoserine modification. Residues 264–300 (QQALLRPRPGQATSHIFYEPDAYDDLDQEDPDDDLDI) form a disordered region. Residues 284 to 300 (DAYDDLDQEDPDDDLDI) are compositionally biased toward acidic residues.

This sequence belongs to the ELP5 family. Component of the elongator complex which consists of ELP1, ELP2, ELP3, ELP4, ELP5 and ELP6; in the complex, is required for optimal binding of ELP3 to ELP4. In terms of processing, tyrosine-phosphorylated. As to expression, ubiquitously expressed with high levels in heart, brain, liver, skeletal muscle and testis.

It is found in the nucleus. The protein localises to the cytoplasm. Its pathway is tRNA modification; 5-methoxycarbonylmethyl-2-thiouridine-tRNA biosynthesis. In terms of biological role, component of the elongator complex which is required for multiple tRNA modifications, including mcm5U (5-methoxycarbonylmethyl uridine), mcm5s2U (5-methoxycarbonylmethyl-2-thiouridine), and ncm5U (5-carbamoylmethyl uridine). The elongator complex catalyzes formation of carboxymethyluridine in the wobble base at position 34 in tRNAs. Involved in cell migration. This is Elongator complex protein 5 from Homo sapiens (Human).